The following is a 471-amino-acid chain: Probable anion transporter 5, chloroplastic (471 aa).

Residues 1–59 (MAASASASALQAERCLLVGVGAGPRRHRLPLRMPPPLHAPPALLLLPHRRRRRWPPAVR) constitute a chloroplast transit peptide. Residues 56-76 (PAVRASPGEGGGGGGGGGGGG) are disordered. The next 4 membrane-spanning stretches (helical) occupy residues 62-82 (PGEG…AGAL), 103-123 (IGVV…GFMP), 162-182 (VVFG…PPII), and 185-205 (LGWE…CLGF). The segment covering 63–76 (GEGGGGGGGGGGGG) has biased composition (gly residues). The interval 226–247 (GQSPSGSSDLISSSVSPKSSES) is disordered. A compositionally biased stretch (low complexity) spans 228–247 (SPSGSSDLISSSVSPKSSES). 6 helical membrane passes run 270–290 (VWAM…CLSW), 307–327 (AWVS…AAPF), 348–368 (IAFL…GVPP), 371–391 (IVAF…GLYC), 403–423 (ILLG…VALT), and 435–455 (ISLF…WLAF).

The protein belongs to the major facilitator superfamily. Sodium/anion cotransporter (TC 2.A.1.14) family.

It is found in the plastid. The protein localises to the chloroplast membrane. Functionally, probable anion transporter. The protein is Probable anion transporter 5, chloroplastic (PHT4;5) of Oryza sativa subsp. japonica (Rice).